A 297-amino-acid polypeptide reads, in one-letter code: UBX domain-containing protein 1 (297 aa).

N-acetylalanine is present on Ala-2. The UBA domain occupies 2–42; the sequence is AELTALESLIEMGFPKGRAEKALALTGNQGIEAAMDWLMEH. The interval 40–210 is disordered; the sequence is MEHEDDPDVD…PSREPPTKRE (171 aa). Positions 43-297 are interaction with BRCA1; sequence EDDPDVDEPL…VLIVAKKCPG (255 aa). Composition is skewed to basic and acidic residues over residues 86-122 and 137-177; these read LTEE…ERER and RLQE…ERAK. A coiled-coil region spans residues 86–176; that stretch reads LTEEERQEQT…KIERDKAERA (91 aa). The span at 187–199 shows a compositional bias: pro residues; it reads PSPPATEPGPVPS. Residue Ser-199 is modified to Phosphoserine. Ser-200 carries the post-translational modification Phosphoserine; by MAPK12. Residues Thr-207 and Thr-229 each carry the phosphothreonine modification. A UBX domain is found at 209–291; sequence REYDQCRIQV…GLVPSAVLIV (83 aa). Ser-270 bears the Phosphoserine mark.

As to quaternary structure, component of a complex required to couple retrotranslocation, ubiquitination and deglycosylation composed of NGLY1, SAKS1, AMFR, VCP and RAD23B. Interacts with HOMER2. Interacts directly with VCP. Interacts with BRCA1 and BARD1; interaction takes place when BRCA1 is not autoubiquitinated bur is strongly enhanced in the presence of autoubiquitinated BRCA1.

The protein resides in the cytoplasm. In terms of biological role, ubiquitin-binding protein that interacts with the BRCA1-BARD1 heterodimer, and regulates its activity. Specifically binds 'Lys-6'-linked polyubiquitin chains. Interaction with autoubiquitinated BRCA1, leads to inhibit the E3 ubiquitin-protein ligase activity of the BRCA1-BARD1 heterodimer. Component of a complex required to couple deglycosylation and proteasome-mediated degradation of misfolded proteins in the endoplasmic reticulum that are retrotranslocated in the cytosol. The protein is UBX domain-containing protein 1 (UBXN1) of Bos taurus (Bovine).